A 576-amino-acid chain; its full sequence is 5'-nucleotidase (576 aa).

The signal sequence occupies residues 1 to 28 (MRPAAAKVPKWLLLALSALLPQWPAASA). Zn(2+) contacts are provided by Asp38 and His40. A disulfide bridge connects residues Cys53 and Cys59. The N-linked (GlcNAc...) asparagine glycan is linked to Asn55. Zn(2+)-binding residues include Asp87, Asn119, His222, and His245. 2 N-linked (GlcNAc...) asparagine glycosylation sites follow: Asn313 and Asn335. Disulfide bonds link Cys355–Cys360 and Cys367–Cys389. Residue Arg356 coordinates AMP. IMP is bound at residue Arg356. AMP-binding residues include Asn392 and Arg397. 2 residues coordinate IMP: Asn392 and Arg397. Asn405 is a glycosylation site (N-linked (GlcNAc...) asparagine). AMP is bound at residue Phe419. Position 419 (Phe419) interacts with IMP. A disulfide bridge links Cys478 with Cys481. AMP contacts are provided by Tyr502 and Asp508. IMP-binding residues include Tyr502 and Asp508. Ser551 carries GPI-anchor amidated serine lipidation. Residues 552-576 (AASHYQGSFPLVILSFWAMILILYQ) constitute a propeptide, removed in mature form.

It belongs to the 5'-nucleotidase family. Homodimer. The cofactor is Zn(2+). In terms of tissue distribution, expressed at high levels in the placenta, kidney, lung and stomach and at lower levels in the thymus, spleen, skeletal muscle and esophagus.

It is found in the cell membrane. It carries out the reaction a ribonucleoside 5'-phosphate + H2O = a ribonucleoside + phosphate. The catalysed reaction is a 2'-deoxyribonucleoside 5'-phosphate + H2O = a 2'-deoxyribonucleoside + phosphate. It catalyses the reaction dTMP + H2O = thymidine + phosphate. The enzyme catalyses CMP + H2O = cytidine + phosphate. It carries out the reaction IMP + H2O = inosine + phosphate. The catalysed reaction is AMP + H2O = adenosine + phosphate. It catalyses the reaction GMP + H2O = guanosine + phosphate. The enzyme catalyses UMP + H2O = uridine + phosphate. It carries out the reaction dAMP + H2O = 2'-deoxyadenosine + phosphate. The catalysed reaction is dCMP + H2O = 2'-deoxycytidine + phosphate. Functionally, catalyzes the hydrolysis of nucleotide monophosphates, releasing inorganic phosphate and the corresponding nucleoside. Hydrolyzes IMP. Shows a preference for ribonucleotide monophosphates over their equivalent deoxyribose forms. Although AMP is the preferred substrate can also hydrolyze UMP, GMP, CMP, dAMP, dCMP, dTMP, NAD and NMN. The chain is 5'-nucleotidase (Nt5e) from Mus musculus (Mouse).